The chain runs to 570 residues: A-type ATP synthase subunit A (570 aa).

Residue 223-230 (GPFGSGKT) coordinates ATP.

This sequence belongs to the ATPase alpha/beta chains family. Has multiple subunits with at least A(3), B(3), C, D, E, F, H, I and proteolipid K(x).

Its subcellular location is the cell membrane. It carries out the reaction ATP + H2O + 4 H(+)(in) = ADP + phosphate + 5 H(+)(out). In terms of biological role, component of the A-type ATP synthase that produces ATP from ADP in the presence of a proton gradient across the membrane. The A chain is the catalytic subunit. The sequence is that of A-type ATP synthase subunit A from Nanoarchaeum equitans (strain Kin4-M).